The sequence spans 240 residues: Lysoplasmalogenase TMEM86A (240 aa).

The Cytoplasmic portion of the chain corresponds to 1 to 21 (MVSPVTVVKSEGPKLVPFFKA). The chain crosses the membrane as a helical span at residues 22-42 (TCVYFVLWLPSSSPSWVSTLI). Residue lysine 43 is a topological domain, extracellular. Residues 44–64 (CLPIFCLWLFLLAHGLGFLLA) form a helical membrane-spanning segment. Over 65–70 (HPSATR) the chain is Cytoplasmic. A helical membrane pass occupies residues 71 to 91 (IFVGLVFSAVGDAFLIWQDQG). Residue tyrosine 92 is a topological domain, extracellular. The helical transmembrane segment at 93–113 (FVHGLLMFAVTHMFYASAFGM) threads the bilayer. At 114 to 115 (QP) the chain is on the cytoplasmic side. Residues 116 to 136 (LALRTGLVMAALSGLCYALLY) form a helical membrane-spanning segment. The Extracellular segment spans residues 137 to 138 (PC). A helical transmembrane segment spans residues 139-159 (LSGAFTYLVGVYVALIGFMGW). Over 160–174 (RAMAGLRLAGADWRW) the chain is Cytoplasmic. Residues 175-195 (TELAAGSGALFFIISDLTIAL) form a helical membrane-spanning segment. At 196–206 (NKFCFPVPYSR) the chain is on the extracellular side. Residues 207–227 (ALIMSTYYVAQMLVALSAVES) traverse the membrane as a helical segment. Residues 228 to 240 (REPVEHYRLTKAN) lie on the Cytoplasmic side of the membrane.

Belongs to the TMEM86 family. As to expression, expressed in the macrophages.

The protein localises to the endoplasmic reticulum membrane. It carries out the reaction a 1-O-(1Z-alkenyl)-sn-glycero-3-phosphocholine + H2O = a 2,3-saturated aldehyde + sn-glycerol 3-phosphocholine. It catalyses the reaction a 1-O-(1Z-alkenyl)-sn-glycero-3-phosphoethanolamine + H2O = a 2,3-saturated aldehyde + sn-glycero-3-phosphoethanolamine. Catalyzes the hydrolysis of the vinyl ether bond of choline or ethanolamine lysoplasmalogens, forming fatty aldehyde and glycerophosphocholine or glycerophosphoethanolamine, respectively and is specific for the sn-2-deacylated (lyso) form of plasmalogen. Plays an important role in lysoplasmalogen metabolism in the adipocyte tissue and macrophages. The polypeptide is Lysoplasmalogenase TMEM86A (TMEM86A) (Homo sapiens (Human)).